A 1273-amino-acid polypeptide reads, in one-letter code: Homeobox protein cut-like ceh-44 (1273 aa).

Coiled-coil stretches lie at residues 101 to 407 (LLKG…DGFK) and 440 to 468 (RQKN…KFED). DNA-binding regions (CUT) lie at residues 591–681 (NVQA…LSPR), 832–919 (QAQY…KQPK), and 978–1065 (IDES…KEES). The segment at 1069–1100 (VKAKIESVPAPREAPRPVKRKHSSDTDDYDLN) is disordered. The segment at residues 1103–1162 (KPIQRTVITDYQKDTLRFVFVNEQHPSNELCEQISLKLDMSLRTVQNWFHNHRTRSKARE) is a DNA-binding region (homeobox).

Belongs to the CUT homeobox family.

The protein resides in the nucleus. Functionally, probable DNA-binding regulatory protein involved in cell-fate specification. This Caenorhabditis elegans protein is Homeobox protein cut-like ceh-44.